We begin with the raw amino-acid sequence, 400 residues long: Malonyl CoA-acyl carrier protein transacylase (400 aa).

Active-site residues include Ser-92 and His-201.

This sequence belongs to the FabD family.

It catalyses the reaction holo-[ACP] + malonyl-CoA = malonyl-[ACP] + CoA. Its function is as follows. Is involved in the mycosubtilin synthetase assembly, by catalyzing the transfer of malonyl groups to a specific acyl-carrier-protein domain on MycA. This Bacillus subtilis protein is Malonyl CoA-acyl carrier protein transacylase (fenF).